The chain runs to 289 residues: Nucleotide-binding protein Franean1_2060 (289 aa).

13–20 is an ATP binding site; that stretch reads GLSGAGRS. Residue 64-67 participates in GTP binding; it reads DVRG.

This sequence belongs to the RapZ-like family.

Its function is as follows. Displays ATPase and GTPase activities. This chain is Nucleotide-binding protein Franean1_2060, found in Parafrankia sp. (strain EAN1pec).